The following is a 90-amino-acid chain: UPF0367 protein P9301_01411 (90 aa).

Belongs to the UPF0367 family.

This Prochlorococcus marinus (strain MIT 9301) protein is UPF0367 protein P9301_01411.